The sequence spans 373 residues: C-C chemokine receptor type 2 (373 aa).

At 1–55 the chain is on the extracellular side; that stretch reads MEDNNMLPQFIHGILSTSHSLFTRSIQELDEGATTPYDYDDGEPCHKTSVKQIGA. Residues 56–83 traverse the membrane as a helical segment; the sequence is WILPPLYSLVFIFGFVGNMLVIIILIGC. Topologically, residues 84 to 93 are cytoplasmic; it reads KKLKSMTDIY. A helical membrane pass occupies residues 94-114; the sequence is LLNLAISDLLFLLTLPFWAHY. The Extracellular portion of the chain corresponds to 115–127; that stretch reads AANEWVFGNIMCK. Cysteine 126 and cysteine 203 form a disulfide bridge. Residues 128 to 149 form a helical membrane-spanning segment; the sequence is VFTGLYHIGYFGGIFFIILLTI. Topologically, residues 150–166 are cytoplasmic; it reads DRYLAIVHAVFALKART. At tyrosine 152 the chain carries Phosphotyrosine; by JAK2. The chain crosses the membrane as a helical span at residues 167-191; that stretch reads VTFGVITSVVTWVVAVFASLPGIIF. The Extracellular portion of the chain corresponds to 192 to 219; that stretch reads TKSKQDDHHYTCGPYFTQLWKNFQTIMR. A helical membrane pass occupies residues 220 to 239; it reads NILSLILPLLVMVICYSGIL. The Cytoplasmic segment spans residues 240-256; that stretch reads HTLFRCRNEKKRHRAVR. Residues 257-281 form a helical membrane-spanning segment; sequence LIFAIMIVYFLFWTPYNIVLFLTTF. The Extracellular portion of the chain corresponds to 282-298; that stretch reads QESLGMSNCVIDKHLDQ. A helical transmembrane segment spans residues 299 to 322; it reads AMQVTETLGMTHCCINPVIYAFVG. Topologically, residues 323–373 are cytoplasmic; sequence EKFRRYLSIFFRKHIAKRLCKQCPVFYRETADRVSSTFTPSTGEQEVSVGL.

The protein belongs to the G-protein coupled receptor 1 family. Interacts with ARRB1. Interacts (via extracellular N-terminal region) with beta-defensin DEFB106A/DEFB106B; this interaction may preferentially require specific tyrosine sulfation on CCR2. Interacts with NUP85; the interaction is required for CCR2 clusters formation on the cell membrane and CCR2 signaling. Post-translationally, N-glycosylated. Sulfation increases the affinity for both monomeric and dimeric CCL2 with stronger binding to the monomeric form. Binding of sulfated CCR2 to CCL2 promotes conversion of CCL2 from dimer to monomer. In terms of tissue distribution, epressed in mature thymocytes. Detected in monocyte/macrophage cell lines, but not in nonhematopoietic cell lines.

Its subcellular location is the cell membrane. Its function is as follows. Key functional receptor for CCL2 but can also bind CCL7 and CCL12 chemokines. Its binding with CCL2 on monocytes and macrophages mediates chemotaxis and migration induction through the activation of the PI3K cascade, the small G protein Rac and lamellipodium protrusion. Also acts as a receptor for the beta-defensin DEFB106A/DEFB106B. Regulates the expression of T-cell inflammatory cytokines and T-cell differentiation, promoting the differentiation of T-cells into T-helper 17 cells (Th17) during inflammation. Facilitates the export of mature thymocytes by enhancing directional movement of thymocytes to sphingosine-1-phosphate stimulation and up-regulation of S1P1R expression; signals through the JAK-STAT pathway to regulate FOXO1 activity leading to an increased expression of S1P1R. Plays an important role in mediating peripheral nerve injury-induced neuropathic pain. Increases NMDA-mediated synaptic transmission in both dopamine D1 and D2 receptor-containing neurons, which may be caused by MAPK/ERK-dependent phosphorylation of GRIN2B/NMDAR2B. Mediates the recruitment of macrophages and monocytes to the injury site following brain injury. The sequence is that of C-C chemokine receptor type 2 (Ccr2) from Mus musculus (Mouse).